The sequence spans 156 residues: Large ribosomal subunit protein uL30 (156 aa).

The protein belongs to the universal ribosomal protein uL30 family. As to quaternary structure, part of the 50S ribosomal subunit.

In Sulfolobus acidocaldarius (strain ATCC 33909 / DSM 639 / JCM 8929 / NBRC 15157 / NCIMB 11770), this protein is Large ribosomal subunit protein uL30.